We begin with the raw amino-acid sequence, 49 residues long: Disintegrin ocellatin (49 aa).

A Disintegrin domain is found at 1 to 47 (DCESGPCCDNCKFLKEGTICKMARGDNMHHYCNGKTCDCPRNPYKGE). 4 cysteine pairs are disulfide-bonded: cysteine 2-cysteine 11, cysteine 7-cysteine 32, cysteine 8-cysteine 37, and cysteine 20-cysteine 39. The Cell attachment site signature appears at 24 to 26 (RGD).

This sequence belongs to the venom metalloproteinase (M12B) family. P-II subfamily. P-IIa sub-subfamily. As to quaternary structure, monomer. In terms of tissue distribution, expressed by the venom gland.

Its subcellular location is the secreted. In terms of biological role, inhibits ADP-induced human platelet aggregation. The chain is Disintegrin ocellatin from Echis ocellatus (Ocellated saw-scaled viper).